Here is a 231-residue protein sequence, read N- to C-terminus: Acyl-protein thioesterase 2 (231 aa).

The S-palmitoyl cysteine moiety is linked to residue Cys-2. Ser-82 bears the Phosphoserine mark. Catalysis depends on charge relay system residues Ser-122, Asp-176, and His-210.

The protein belongs to the AB hydrolase superfamily. AB hydrolase 2 family. Ubiquitous; detected at low levels.

Its subcellular location is the cytoplasm. The enzyme catalyses S-hexadecanoyl-L-cysteinyl-[protein] + H2O = L-cysteinyl-[protein] + hexadecanoate + H(+). It carries out the reaction prostaglandin E2 1-glyceryl ester + H2O = prostaglandin E2 + glycerol + H(+). It catalyses the reaction 1-hexadecanoyl-sn-glycero-3-phosphocholine + H2O = sn-glycerol 3-phosphocholine + hexadecanoate + H(+). The catalysed reaction is 1-octadecanoyl-sn-glycero-3-phosphocholine + H2O = octadecanoate + sn-glycerol 3-phosphocholine + H(+). The enzyme catalyses 1-hexadecanoyl-sn-glycero-3-phosphate + H2O = sn-glycerol 3-phosphate + hexadecanoate + H(+). It carries out the reaction 1-hexadecanoyl-sn-glycero-3-phospho-L-serine + H2O = sn-glycero-3-phospho-L-serine + hexadecanoate + H(+). Acts as an acyl-protein thioesterase hydrolyzing fatty acids from S-acylated cysteine residues in proteins such as trimeric G alpha proteins, GSDMD, GAP43, ZDHHC6 or HRAS. Deacylates GAP43. Mediates depalmitoylation of ZDHHC6. Has lysophospholipase activity. Hydrolyzes prostaglandin glycerol esters (PG-Gs). Hydrolyzes PG-Gs in the following order prostaglandin D2-glycerol ester (PGD2-G) &gt; prostaglandin E2 glycerol ester (PGE2-G) &gt; prostaglandin F2-alpha-glycerol ester (PGF2-alpha-G). Hydrolyzes 1-arachidonoylglycerol but not 2-arachidonoylglycerol or arachidonoylethanolamide. The chain is Acyl-protein thioesterase 2 (Lypla2) from Mus musculus (Mouse).